Here is a 475-residue protein sequence, read N- to C-terminus: ATP synthase subunit beta (475 aa).

161 to 168 (GGAGVGKT) provides a ligand contact to ATP.

This sequence belongs to the ATPase alpha/beta chains family. As to quaternary structure, F-type ATPases have 2 components, CF(1) - the catalytic core - and CF(0) - the membrane proton channel. CF(1) has five subunits: alpha(3), beta(3), gamma(1), delta(1), epsilon(1). CF(0) has three main subunits: a(1), b(2) and c(9-12). The alpha and beta chains form an alternating ring which encloses part of the gamma chain. CF(1) is attached to CF(0) by a central stalk formed by the gamma and epsilon chains, while a peripheral stalk is formed by the delta and b chains.

It is found in the cell membrane. It catalyses the reaction ATP + H2O + 4 H(+)(in) = ADP + phosphate + 5 H(+)(out). Produces ATP from ADP in the presence of a proton gradient across the membrane. The catalytic sites are hosted primarily by the beta subunits. This is ATP synthase subunit beta from Mycoplasma mycoides subsp. mycoides SC (strain CCUG 32753 / NCTC 10114 / PG1).